The sequence spans 212 residues: External core antigen (212 aa).

The signal sequence occupies residues 1–19 (MQLFPLCLIISCSCPTVQA). The segment at 25–27 (GWL) is HBEAG. The segment at 165–212 (NAPILSTLPETTVVRRRGRSPRRRTPSPRRRRSQSPRRRRSQSRESQC) is disordered. The segment covering 178 to 205 (VRRRGRSPRRRTPSPRRRRSQSPRRRRS) has biased composition (basic residues). The 1; half-length repeat unit spans residues 184–190 (SPRRRTP). Positions 184 to 206 (SPRRRTPSPRRRRSQSPRRRRSQ) are 3 X 8 AA repeats of S-P-R-R-R-R-S-Q. A run of 2 repeats spans residues 191-198 (SPRRRRSQ) and 199-206 (SPRRRRSQ).

The protein belongs to the orthohepadnavirus precore antigen family. In terms of assembly, homodimerizes. Phosphorylated. In terms of processing, cleaved by host furin.

Its subcellular location is the secreted. It is found in the host nucleus. Its function is as follows. May regulate immune response to the intracellular capsid in acting as a T-cell tolerogen, by having an immunoregulatory effect which prevents destruction of infected cells by cytotoxic T-cells. This immune regulation may predispose to chronicity during perinatal infections and prevent severe liver injury during adult infections. The polypeptide is External core antigen (Hepatitis B virus genotype C subtype ayr (isolate Human/Japan/Okamoto/-) (HBV-C)).